Here is a 211-residue protein sequence, read N- to C-terminus: Thiamine-phosphate synthase (211 aa).

4-amino-2-methyl-5-(diphosphooxymethyl)pyrimidine is bound by residues Gln37–Lys41 and Asn69. Residues Asp70 and Asp89 each coordinate Mg(2+). Ser108 lines the 4-amino-2-methyl-5-(diphosphooxymethyl)pyrimidine pocket. Thr134–Thr136 contributes to the 2-[(2R,5Z)-2-carboxy-4-methylthiazol-5(2H)-ylidene]ethyl phosphate binding site. Residue Lys137 participates in 4-amino-2-methyl-5-(diphosphooxymethyl)pyrimidine binding. Residues Gly166 and Val186–Ser187 contribute to the 2-[(2R,5Z)-2-carboxy-4-methylthiazol-5(2H)-ylidene]ethyl phosphate site.

It belongs to the thiamine-phosphate synthase family. Mg(2+) serves as cofactor.

The enzyme catalyses 2-[(2R,5Z)-2-carboxy-4-methylthiazol-5(2H)-ylidene]ethyl phosphate + 4-amino-2-methyl-5-(diphosphooxymethyl)pyrimidine + 2 H(+) = thiamine phosphate + CO2 + diphosphate. The catalysed reaction is 2-(2-carboxy-4-methylthiazol-5-yl)ethyl phosphate + 4-amino-2-methyl-5-(diphosphooxymethyl)pyrimidine + 2 H(+) = thiamine phosphate + CO2 + diphosphate. It carries out the reaction 4-methyl-5-(2-phosphooxyethyl)-thiazole + 4-amino-2-methyl-5-(diphosphooxymethyl)pyrimidine + H(+) = thiamine phosphate + diphosphate. It functions in the pathway cofactor biosynthesis; thiamine diphosphate biosynthesis; thiamine phosphate from 4-amino-2-methyl-5-diphosphomethylpyrimidine and 4-methyl-5-(2-phosphoethyl)-thiazole: step 1/1. Its function is as follows. Condenses 4-methyl-5-(beta-hydroxyethyl)thiazole monophosphate (THZ-P) and 2-methyl-4-amino-5-hydroxymethyl pyrimidine pyrophosphate (HMP-PP) to form thiamine monophosphate (TMP). This chain is Thiamine-phosphate synthase, found in Escherichia coli O1:K1 / APEC.